The chain runs to 456 residues: Enolase (456 aa).

Gln-169 contacts (2R)-2-phosphoglycerate. Glu-211 acts as the Proton donor in catalysis. The Mg(2+) site is built by Asp-252, Glu-314, and Asp-341. Residues Lys-366, Arg-395, Ser-396, and Lys-417 each coordinate (2R)-2-phosphoglycerate. Lys-366 acts as the Proton acceptor in catalysis.

Belongs to the enolase family. It depends on Mg(2+) as a cofactor.

It is found in the cytoplasm. The protein localises to the secreted. Its subcellular location is the cell surface. The enzyme catalyses (2R)-2-phosphoglycerate = phosphoenolpyruvate + H2O. The protein operates within carbohydrate degradation; glycolysis; pyruvate from D-glyceraldehyde 3-phosphate: step 4/5. Its function is as follows. Catalyzes the reversible conversion of 2-phosphoglycerate (2-PG) into phosphoenolpyruvate (PEP). It is essential for the degradation of carbohydrates via glycolysis. This chain is Enolase, found in Metamycoplasma arthritidis (strain 158L3-1) (Mycoplasma arthritidis).